The sequence spans 469 residues: Ribosomal protein uS12 methylthiotransferase RimO (469 aa).

One can recognise an MTTase N-terminal domain in the interval 3–119 (TRVYMHTLGC…VARIVSDAQA (117 aa)). [4Fe-4S] cluster-binding residues include cysteine 12, cysteine 48, cysteine 82, cysteine 154, cysteine 158, and cysteine 161. One can recognise a Radical SAM core domain in the interval 140–370 (SLPSHTAYLK…MAVQQAISRA (231 aa)). The region spanning 373–441 (QAMIGRRVEV…EYDLVGRVVA (69 aa)) is the TRAM domain. Residues 444-469 (PSRAARPLPAAPRAAPARKGGLNVLR) form a disordered region. Residues 447–461 (AARPLPAAPRAAPAR) are compositionally biased toward low complexity.

Belongs to the methylthiotransferase family. RimO subfamily. Requires [4Fe-4S] cluster as cofactor.

The protein resides in the cytoplasm. It carries out the reaction L-aspartate(89)-[ribosomal protein uS12]-hydrogen + (sulfur carrier)-SH + AH2 + 2 S-adenosyl-L-methionine = 3-methylsulfanyl-L-aspartate(89)-[ribosomal protein uS12]-hydrogen + (sulfur carrier)-H + 5'-deoxyadenosine + L-methionine + A + S-adenosyl-L-homocysteine + 2 H(+). In terms of biological role, catalyzes the methylthiolation of an aspartic acid residue of ribosomal protein uS12. This Anaeromyxobacter sp. (strain K) protein is Ribosomal protein uS12 methylthiotransferase RimO.